Here is a 279-residue protein sequence, read N- to C-terminus: Thymidylate synthase (279 aa).

133-134 (RR) is a dUMP binding site. Catalysis depends on cysteine 154, which acts as the Nucleophile. DUMP is bound by residues 178–181 (RSND), asparagine 189, and 219–221 (HIY). Aspartate 181 is a (6R)-5,10-methylene-5,6,7,8-tetrahydrofolate binding site. Alanine 278 provides a ligand contact to (6R)-5,10-methylene-5,6,7,8-tetrahydrofolate.

The protein belongs to the thymidylate synthase family. Bacterial-type ThyA subfamily. Homodimer.

The protein resides in the cytoplasm. It carries out the reaction dUMP + (6R)-5,10-methylene-5,6,7,8-tetrahydrofolate = 7,8-dihydrofolate + dTMP. Its pathway is pyrimidine metabolism; dTTP biosynthesis. Catalyzes the reductive methylation of 2'-deoxyuridine-5'-monophosphate (dUMP) to 2'-deoxythymidine-5'-monophosphate (dTMP) while utilizing 5,10-methylenetetrahydrofolate (mTHF) as the methyl donor and reductant in the reaction, yielding dihydrofolate (DHF) as a by-product. This enzymatic reaction provides an intracellular de novo source of dTMP, an essential precursor for DNA biosynthesis. In Streptococcus pneumoniae (strain ATCC 700669 / Spain 23F-1), this protein is Thymidylate synthase.